A 606-amino-acid polypeptide reads, in one-letter code: Transmembrane 9 superfamily member 1 (606 aa).

A signal peptide spans 1 to 27; it reads MTVLGHPRSWSCRWWPLLLLLLLTGRE. Residue Asn-178 is glycosylated (N-linked (GlcNAc...) asparagine). The next 4 helical transmembrane spans lie at 237 to 257, 310 to 330, 339 to 359, and 373 to 393; these read LSIINSMVLVFLLVGFVAVIL, VLGVGAQFLALGTGIIVMALL, GAINSAAILLYALTCCISGYV, and VWNIILTTSLFSVPFFLTWSV. A glycan (N-linked (GlcNAc...) asparagine) is linked at Asn-401. The next 4 helical transmembrane spans lie at 412–432, 469–489, 499–519, and 535–555; these read ILLLLTVWLLVGFPLTVIGGI, VGGFLPFSAISVELYYIFATV, GILFFVFAILLSVGACISIAL, and SVLSVGSTGLFIFLYSVFYYA. Residue Asn-559 is glycosylated (N-linked (GlcNAc...) asparagine). Residues 570–590 traverse the membrane as a helical segment; sequence FGYSLLTGYVFFLMLGTISFF.

Belongs to the nonaspanin (TM9SF) (TC 9.A.2) family.

The protein localises to the lysosome membrane. It is found in the cytoplasmic vesicle. It localises to the autophagosome membrane. Its function is as follows. Plays an essential role in autophagy. This Bos taurus (Bovine) protein is Transmembrane 9 superfamily member 1 (TM9SF1).